Consider the following 874-residue polypeptide: Cellulose synthase catalytic subunit [UDP-forming] (874 aa).

4 helical membrane-spanning segments follow: residues 30–50, 151–171, 173–193, and 230–250; these read SPFS…VFPL, ILGV…TQPF, PLSQ…VRRM, and LVCG…LVLG. The interval 271-364 is catalytic subdomain A; sequence QWPTVDIFVP…FVAIFDCDHV (94 aa). Asp313 is an active-site residue. Asp360 and Asp362 together coordinate substrate. A catalytic subdomain B region spans residues 441-501; sequence KPLDEIGGIA…GQRIRWARGM (61 aa). The active site involves Asp457. 5 helical membrane passes run 525–545, 547–567, 592–612, 634–654, and 668–688; these read LNAM…TAPL, FLLL…LFVI, IYET…LINP, VISR…AAGV, and VIVS…AVAV. One can recognise a PilZ domain in the interval 694–790; it reads QVRRAHRVEI…QHIDFVQCTF (97 aa). A helical membrane pass occupies residues 833–853; that stretch reads SVKVIFRSLTALIAWIVSFIP.

Belongs to the glycosyltransferase 2 family. It depends on Mg(2+) as a cofactor.

It is found in the cell inner membrane. The enzyme catalyses [(1-&gt;4)-beta-D-glucosyl](n) + UDP-alpha-D-glucose = [(1-&gt;4)-beta-D-glucosyl](n+1) + UDP + H(+). It participates in glycan metabolism; bacterial cellulose biosynthesis. Activated by bis-(3'-5') cyclic diguanylic acid (c-di-GMP). Catalytic subunit of cellulose synthase. It polymerizes uridine 5'-diphosphate glucose to cellulose, which is produced as an extracellular component for mechanical and chemical protection at the onset of the stationary phase, when the cells exhibit multicellular behavior (rdar morphotype). Coexpression of cellulose and thin aggregative fimbriae leads to a hydrophobic network with tightly packed cells embedded in a highly inert matrix. The chain is Cellulose synthase catalytic subunit [UDP-forming] (bcsA) from Salmonella typhimurium (strain LT2 / SGSC1412 / ATCC 700720).